Consider the following 189-residue polypeptide: Ribosome-recycling factor (189 aa).

This sequence belongs to the RRF family.

Its subcellular location is the cytoplasm. In terms of biological role, responsible for the release of ribosomes from messenger RNA at the termination of protein biosynthesis. May increase the efficiency of translation by recycling ribosomes from one round of translation to another. This Salinibacter ruber (strain DSM 13855 / M31) protein is Ribosome-recycling factor.